Here is a 197-residue protein sequence, read N- to C-terminus: ATP-dependent Clp protease proteolytic subunit 1 (197 aa).

Histidine 126 is a catalytic residue.

It belongs to the peptidase S14 family. In terms of assembly, fourteen ClpP subunits assemble into 2 heptameric rings which stack back to back to give a disk-like structure with a central cavity, resembling the structure of eukaryotic proteasomes.

The protein localises to the cytoplasm. It catalyses the reaction Hydrolysis of proteins to small peptides in the presence of ATP and magnesium. alpha-casein is the usual test substrate. In the absence of ATP, only oligopeptides shorter than five residues are hydrolyzed (such as succinyl-Leu-Tyr-|-NHMec, and Leu-Tyr-Leu-|-Tyr-Trp, in which cleavage of the -Tyr-|-Leu- and -Tyr-|-Trp bonds also occurs).. Cleaves peptides in various proteins in a process that requires ATP hydrolysis. Has a chymotrypsin-like activity. Plays a major role in the degradation of misfolded proteins. The chain is ATP-dependent Clp protease proteolytic subunit 1 from Nocardia farcinica (strain IFM 10152).